A 79-amino-acid chain; its full sequence is U1-plectoxin-Pt1c (79 aa).

The N-terminal stretch at 1 to 18 (HLILASALICALVVCTFA) is a signal peptide. Positions 19–31 (EEQVNVPFLPDER) are excised as a propeptide. Intrachain disulfides connect cysteine 35–cysteine 49, cysteine 42–cysteine 55, cysteine 48–cysteine 66, cysteine 52–cysteine 75, and cysteine 57–cysteine 64. Residues 78-79 (RR) constitute a propeptide that is removed on maturation.

This sequence belongs to the neurotoxin 02 (plectoxin) family. 02 (plectoxin) subfamily. Expressed by the venom gland.

The protein localises to the secreted. Functionally, potent toxin that may paralyze and/or kill insect pests such as H.virescens (lepidoptera), S.exigua (beet armyworm) and M.sexta (tobacco hornworm). This is U1-plectoxin-Pt1c from Plectreurys tristis (Spider).